Consider the following 410-residue polypeptide: Acetyltransferase aurG (410 aa).

Transmembrane regions (helical) follow at residues 3–23 (LWLVLANQVGLVGTLVLVVCF), 28–48 (SLVRPLLLPGITALVSYGLIL), and 59–79 (WSLVNLNTAGLFLQYLDVGLI). Polar residues predominate over residues 90–99 (TSSRGGQPNA). Positions 90-112 (TSSRGGQPNASLDLAGRKKPPSS) are disordered. A glycan (N-linked (GlcNAc...) asparagine) is linked at N98. 4 helical membrane-spanning segments follow: residues 157–177 (AMTLLWSVLVLDVMGLVGGDL), 219–239 (MYFSLQVVYSFLAIVFVMVGL), 300–320 (ILATFFVSGLLHLFCAEYSYG), and 364–384 (IGYVWVLLWFLWTSPAYFFPL).

It belongs to the wax synthase family.

The protein localises to the membrane. It participates in polyketide biosynthesis. Functionally, acetyltransferase; part of the gene cluster that mediates the biosynthesis of aurovertins, fungal polyketides that exhibit potent inhibition of adenosine triphosphate synthase. Tha biosynthesis starts with the HR-PKS aurA that selects propionate as the starter unit; synthesizes a hexa-ene chain through the repeated functions of the KR and DH domains in the first six iterations; selectively introduces three alpha-methyl substitutions at C4, C6, and C16 using the S-adensylmethionine-dependent cMET; and shuts off KR and DH in the last three iterations to afford a 1,3,5-triketo portion that can undergo intramolecular cyclization to yield the alpha-pyrone intermediate. AurE may act as a cyclase and enhances the rate of pyrone formation and product release of aurA. The methyltransferase aurB then methylates the C17 hydroxyl group. C17 methylation is required to initiate epoxidation by the downstream monooxygenase aurC. The monooxygenase aurC and the epoxide hydrolase aurD can iteratively transform the terminal triene portion of the methylated precursor into the dioxabicyclo[3.2.1]octane scaffold of aurovertin E. Epoxidation modifications of the precursor occur in two separate steps; bis-epoxidation of the two terminal olefins takes place first, followed by another epoxidation that occurs at C7-C8 after tetrahydrofuran formation. The O-acyltransferase aurG converts aurovertin E to aurovertin A. The chain is Acetyltransferase aurG from Calcarisporium arbuscula (Dendryphion arbuscula).